The following is a 345-amino-acid chain: Homeobox-leucine zipper protein HOX16 (345 aa).

The segment at residues 76-135 is a DNA-binding region (homeobox); the sequence is LPEKKRRLTPEQVHLLERSFEEENKLEPERKTELARKLGLQPRQVAVWFQNRRARWKTKQ. The segment at 134–178 is leucine-zipper; it reads KQLERDFDRLKASFDALRADHDALLQDNHRLHSQVMSLTEKLQEK. The segment at 220-241 is disordered; it reads FEEQQEQQVKAEDRLSTGSGGS.

Belongs to the HD-ZIP homeobox family. Class I subfamily. As to expression, expressed in seedlings, stems, leaf sheaths and blades and panicles.

It localises to the nucleus. Functionally, probable transcription factor. The chain is Homeobox-leucine zipper protein HOX16 (HOX16) from Oryza sativa subsp. indica (Rice).